The sequence spans 175 residues: MVRIFLTGYMGAGKTTLGKAFARKLNVPFIDLDWYIEERFHKTVGELFTERGEAGFRELERNMLHEVAEFENVVISTGGGAPCFYDNMEFMNRTGKTVFLNVHPDVLFRRLRIAKQQRPILQGKEDDELMDFIIQALEKRAPFYTQAQYIFNADELEDRWQIESSVQRLQELLEL.

G11–T16 lines the ATP pocket. Position 15 (T15) interacts with Mg(2+). Positions 33, 57, and 79 each coordinate substrate. R118 is a binding site for ATP. Residue R140 participates in substrate binding.

This sequence belongs to the shikimate kinase family. Monomer. The cofactor is Mg(2+).

Its subcellular location is the cytoplasm. The catalysed reaction is shikimate + ATP = 3-phosphoshikimate + ADP + H(+). The protein operates within metabolic intermediate biosynthesis; chorismate biosynthesis; chorismate from D-erythrose 4-phosphate and phosphoenolpyruvate: step 5/7. Functionally, catalyzes the specific phosphorylation of the 3-hydroxyl group of shikimic acid using ATP as a cosubstrate. This chain is Shikimate kinase, found in Bacteroides thetaiotaomicron (strain ATCC 29148 / DSM 2079 / JCM 5827 / CCUG 10774 / NCTC 10582 / VPI-5482 / E50).